Consider the following 255-residue polypeptide: Type III pantothenate kinase (255 aa).

7 to 14 (DVGNTRLK) provides a ligand contact to ATP. Substrate-binding positions include Y96 and 103–106 (GADR). D105 acts as the Proton acceptor in catalysis. T133 contributes to the ATP binding site. T183 contributes to the substrate binding site.

This sequence belongs to the type III pantothenate kinase family. As to quaternary structure, homodimer. NH4(+) is required as a cofactor. It depends on K(+) as a cofactor.

The protein localises to the cytoplasm. The catalysed reaction is (R)-pantothenate + ATP = (R)-4'-phosphopantothenate + ADP + H(+). Its pathway is cofactor biosynthesis; coenzyme A biosynthesis; CoA from (R)-pantothenate: step 1/5. In terms of biological role, catalyzes the phosphorylation of pantothenate (Pan), the first step in CoA biosynthesis. The sequence is that of Type III pantothenate kinase from Polaromonas sp. (strain JS666 / ATCC BAA-500).